Consider the following 278-residue polypeptide: MKYWNLKKINQSSLDKTGVIPRSISKLFEKFKKELDPNAEVEAIEEFKVARYQTIASVKYVVFLFIIPVLINQVSKSFLFGPFINYLWNRDEHIIFLNHSQEERAFAELQRFEEKLHFEILIGKIDSPSSNLINYKMTEKALELAIDYANESSCAITNILADLLSIAIFISILISSKRQFSILKSFLNELIYSLSDTAKAFLIILFTDMFVGFHSPHGWEVIIEIILRHLGLPESRDFIFVFISTFPVILDTIFKYWIFRYLNKISPSAVATYHNMNE.

4 helical membrane passes run 61 to 81 (VVFL…FLFG), 154 to 174 (CAIT…SILI), 203 to 223 (IILF…EVII), and 238 to 258 (FIFV…KYWI).

Belongs to the CemA family.

The protein resides in the plastid. It localises to the chloroplast inner membrane. The catalysed reaction is K(+)(in) + H(+)(out) = K(+)(out) + H(+)(in). In terms of biological role, contributes to K(+)/H(+) antiport activity by supporting proton efflux to control proton extrusion and homeostasis in chloroplasts in a light-dependent manner to modulate photosynthesis. Prevents excessive induction of non-photochemical quenching (NPQ) under continuous-light conditions. Indirectly promotes efficient inorganic carbon uptake into chloroplasts. The polypeptide is Potassium/proton antiporter CemA (Gracilaria tenuistipitata var. liui (Red alga)).